Reading from the N-terminus, the 53-residue chain is Large ribosomal subunit protein uL30 (53 aa).

This sequence belongs to the universal ribosomal protein uL30 family. As to quaternary structure, part of the 50S ribosomal subunit.

The protein is Large ribosomal subunit protein uL30 of Deinococcus geothermalis (strain DSM 11300 / CIP 105573 / AG-3a).